Here is a 756-residue protein sequence, read N- to C-terminus: 1-phosphatidylinositol 4,5-bisphosphate phosphodiesterase delta-1 (756 aa).

Residues 21-130 form the PH domain; sequence ALLKGSQLLK…WVQGLRKIIH (110 aa). The substrate binding stretch occupies residues 30-57; that stretch reads KVKSSSWRRERFYKLQEDCKTIWQESRK. EF-hand domains follow at residues 140–175 and 176–211; these read KLQH…LNIQ and VDDG…LTQR. Aspartate 153, asparagine 155, aspartate 157, lysine 159, glutamate 164, aspartate 189, serine 191, threonine 193, serine 195, and glutamate 200 together coordinate Ca(2+). An O-linked (GlcNAc) serine glycan is attached at serine 191. Threonine 193 carries an O-linked (GlcNAc) threonine glycan. The 145-residue stretch at 296–440 folds into the PI-PLC X-box domain; sequence QDMDQPLSHY…LKGKILLKGK (145 aa). Histidine 311 is a catalytic residue. Residues asparagine 312, glutamate 341, and aspartate 343 each contribute to the Ca(2+) site. Residue histidine 356 is part of the active site. Position 390 (glutamate 390) interacts with Ca(2+). Substrate contacts are provided by lysine 438 and lysine 440. At threonine 457 the chain carries Phosphothreonine. Residue serine 460 is modified to Phosphoserine. A PI-PLC Y-box domain is found at 492–609; the sequence is LSDMIIYCKS…GYVLKPAFLR (118 aa). 2 residues coordinate substrate: serine 522 and arginine 549. In terms of domain architecture, C2 spans 609 to 737; that stretch reads RDPNTTFNSR…QGYRHVHLLS (129 aa). Residues isoleucine 651, aspartate 653, asparagine 677, aspartate 706, tyrosine 707, and aspartate 708 each contribute to the Ca(2+) site.

As to quaternary structure, interacts with TGM2. Ca(2+) serves as cofactor.

It carries out the reaction a 1,2-diacyl-sn-glycero-3-phospho-(1D-myo-inositol-4,5-bisphosphate) + H2O = 1D-myo-inositol 1,4,5-trisphosphate + a 1,2-diacyl-sn-glycerol + H(+). The catalysed reaction is a 1,2-diacyl-sn-glycero-3-phospho-(1D-myo-inositol) + H2O = 1D-myo-inositol 1-phosphate + a 1,2-diacyl-sn-glycerol + H(+). The production of the second messenger molecules diacylglycerol (DAG) and inositol 1,4,5-trisphosphate (IP3) is mediated by activated phosphatidylinositol-specific phospholipase C enzymes. Essential for trophoblast and placental development. Binds phosphatidylinositol 4,5-bisphosphate. This Rattus norvegicus (Rat) protein is 1-phosphatidylinositol 4,5-bisphosphate phosphodiesterase delta-1.